We begin with the raw amino-acid sequence, 469 residues long: Glutamate--tRNA ligase (469 aa).

A 'HIGH' region motif is present at residues Pro-11 to Asn-21. The 'KMSKS' region motif lies at Lys-243–Arg-247. Lys-246 serves as a coordination point for ATP.

This sequence belongs to the class-I aminoacyl-tRNA synthetase family. Glutamate--tRNA ligase type 1 subfamily. As to quaternary structure, monomer.

Its subcellular location is the cytoplasm. It catalyses the reaction tRNA(Glu) + L-glutamate + ATP = L-glutamyl-tRNA(Glu) + AMP + diphosphate. Its function is as follows. Catalyzes the attachment of glutamate to tRNA(Glu) in a two-step reaction: glutamate is first activated by ATP to form Glu-AMP and then transferred to the acceptor end of tRNA(Glu). The sequence is that of Glutamate--tRNA ligase from Burkholderia lata (strain ATCC 17760 / DSM 23089 / LMG 22485 / NCIMB 9086 / R18194 / 383).